The primary structure comprises 523 residues: Asparagine--tRNA ligase (523 aa).

The tract at residues 329–350 (SARGDTPLAARSTARTPPVRTP) is disordered.

It belongs to the class-II aminoacyl-tRNA synthetase family. As to quaternary structure, homodimer.

The protein resides in the cytoplasm. It catalyses the reaction tRNA(Asn) + L-asparagine + ATP = L-asparaginyl-tRNA(Asn) + AMP + diphosphate + H(+). This chain is Asparagine--tRNA ligase, found in Treponema pallidum (strain Nichols).